The primary structure comprises 255 residues: Acetylglutamate kinase (255 aa).

Substrate-binding positions include 40–41 (GG), Arg62, and Asn157.

The protein belongs to the acetylglutamate kinase family. ArgB subfamily.

The protein localises to the cytoplasm. The catalysed reaction is N-acetyl-L-glutamate + ATP = N-acetyl-L-glutamyl 5-phosphate + ADP. It participates in amino-acid biosynthesis; L-arginine biosynthesis; N(2)-acetyl-L-ornithine from L-glutamate: step 2/4. Catalyzes the ATP-dependent phosphorylation of N-acetyl-L-glutamate. The sequence is that of Acetylglutamate kinase from Parabacteroides distasonis (strain ATCC 8503 / DSM 20701 / CIP 104284 / JCM 5825 / NCTC 11152).